The chain runs to 88 residues: Large ribosomal subunit protein bL27 (88 aa).

Residues 1–24 are disordered; sequence MATKKSGGSSGNGRDSRGRRLGVK.

It belongs to the bacterial ribosomal protein bL27 family.

The protein is Large ribosomal subunit protein bL27 of Ehrlichia chaffeensis (strain ATCC CRL-10679 / Arkansas).